Here is a 156-residue protein sequence, read N- to C-terminus: MKITILAVGTKMPRWVDEAYTDYAKRFGRDITLELKEIKPEKRGGGVTAEKGIAAEHERLIAAIPPRARLVVMDERGKNWTSVKLAEGLKEWMAGGGDVVFVIGGADGLSAELKQRADVLLQLSAMTLPHGMVRVMLAEQIYRAYSILNNHPYHRE.

Residues G104 and 123–128 (LSAMTL) each bind S-adenosyl-L-methionine.

It belongs to the RNA methyltransferase RlmH family. In terms of assembly, homodimer.

It localises to the cytoplasm. It catalyses the reaction pseudouridine(1915) in 23S rRNA + S-adenosyl-L-methionine = N(3)-methylpseudouridine(1915) in 23S rRNA + S-adenosyl-L-homocysteine + H(+). In terms of biological role, specifically methylates the pseudouridine at position 1915 (m3Psi1915) in 23S rRNA. In Chromobacterium violaceum (strain ATCC 12472 / DSM 30191 / JCM 1249 / CCUG 213 / NBRC 12614 / NCIMB 9131 / NCTC 9757 / MK), this protein is Ribosomal RNA large subunit methyltransferase H.